Consider the following 988-residue polypeptide: UvrABC system protein A (988 aa).

33 to 40 is a binding site for ATP; sequence GLSGSGKS. The C4-type zinc finger occupies 255 to 282; sequence CPVCDYSLPELEPRLFSFNAPVGACPSC. ABC transporter domains lie at 312 to 589 and 609 to 938; these read WDRR…PRSL and PNPK…QFLA. 642–649 provides a ligand contact to ATP; that stretch reads GVSGSGKS. A C4-type zinc finger spans residues 741–767; that stretch reads CEACQGDGMIKVEMHFLPDVYVPCDVC. Residues 948–988 form a disordered region; sequence ETRPAAMANKPDARPPRKVKPEKVAKATKTATKKTAKKKAS. Basic and acidic residues predominate over residues 958–972; sequence PDARPPRKVKPEKVA. Positions 978–988 are enriched in basic residues; the sequence is ATKKTAKKKAS.

Belongs to the ABC transporter superfamily. UvrA family. In terms of assembly, forms a heterotetramer with UvrB during the search for lesions.

It localises to the cytoplasm. Its function is as follows. The UvrABC repair system catalyzes the recognition and processing of DNA lesions. UvrA is an ATPase and a DNA-binding protein. A damage recognition complex composed of 2 UvrA and 2 UvrB subunits scans DNA for abnormalities. When the presence of a lesion has been verified by UvrB, the UvrA molecules dissociate. This Xanthomonas campestris pv. campestris (strain ATCC 33913 / DSM 3586 / NCPPB 528 / LMG 568 / P 25) protein is UvrABC system protein A.